We begin with the raw amino-acid sequence, 630 residues long: Lysophospholipase 3 (630 aa).

A signal peptide spans 1-16 (MKALLSLLTAVAVATA). In terms of domain architecture, PLA2c spans 39 to 587 (SCPATRPSIR…KEYCWNGTVD (549 aa)). N-linked (GlcNAc...) asparagine glycans are attached at residues Asn56, Asn95, Asn164, Asn220, Asn283, Asn351, Asn390, Asn443, Asn456, Asn462, Asn493, Asn514, Asn542, Asn566, and Asn583. Residue Asn606 is the site of GPI-like-anchor amidated asparagine attachment. The propeptide at 607 to 630 (AAYTQGVTWLVGILAVGVAMGMTA) is removed in mature form.

Belongs to the lysophospholipase family. The GPI-like anchor contains a phosphoceramide lipid group.

The protein localises to the cell membrane. It catalyses the reaction a 1-acyl-sn-glycero-3-phosphocholine + H2O = sn-glycerol 3-phosphocholine + a fatty acid + H(+). Its function is as follows. Catalyzes the release of fatty acids from lysophospholipids. This Aspergillus fumigatus (strain CBS 144.89 / FGSC A1163 / CEA10) (Neosartorya fumigata) protein is Lysophospholipase 3 (plb3).